Here is a 138-residue protein sequence, read N- to C-terminus: Acidic phospholipase A2 2 (138 aa).

Positions 1–16 (MRTLWIVAVWLTGVEG) are cleaved as a signal peptide. Intrachain disulfides connect Cys-42–Cys-131, Cys-44–Cys-60, Cys-59–Cys-111, Cys-65–Cys-138, Cys-66–Cys-104, Cys-73–Cys-97, and Cys-91–Cys-102. Residues Tyr-43, Gly-45, and Gly-47 each contribute to the Ca(2+) site. Residue His-63 is part of the active site. Asp-64 serves as a coordination point for Ca(2+). Asp-105 is an active-site residue.

In terms of assembly, monomer. Ca(2+) is required as a cofactor. As to expression, expressed by the venom gland.

It localises to the secreted. The catalysed reaction is a 1,2-diacyl-sn-glycero-3-phosphocholine + H2O = a 1-acyl-sn-glycero-3-phosphocholine + a fatty acid + H(+). In terms of biological role, snake venom phospholipase that inhibits ADP- and collagen-induced human platelet aggregation. This inhibition is completely inhibited by abolition of catalytic activity in case of collagen as inducer and partially inhibited in case of ADP as inducer. PLA2 catalyzes the calcium-dependent hydrolysis of the 2-acyl groups in 3-sn-phosphoglycerides. The protein is Acidic phospholipase A2 2 of Macrovipera lebetinus (Levantine viper).